The sequence spans 381 residues: CD209 antigen (381 aa).

Residues 1–37 (MSDSKEPRLQQLGLLEEEQLGGVGFRQTRGYKSLAGC) are Cytoplasmic-facing. 3 short sequence motifs (endocytosis signal) span residues 14–15 (LL), 16–18 (EEE), and 31–34 (YKSL). Residues 38 to 58 (LGHGPLVLQLLSFTLLAGLLV) form a helical; Signal-anchor for type II membrane protein membrane-spanning segment. Over 59–381 (QVSKVPSSLS…TPTTPNPPPE (323 aa)) the chain is Extracellular. N80 carries N-linked (GlcNAc...) asparagine glycosylation. Tandem repeats lie at residues 96-118 (KQQE…PEKS), 119-141 (KQQE…PEKS), 142-164 (KLQE…PEKS), 165-187 (KQQE…PEKS), 188-210 (KQQE…PDRS), and 211-234 (KQQE…RPCP). The tract at residues 96-303 (KQQEIYQELT…GLSDLNHEGT (208 aa)) is 6 X approximate tandem repeats. 3 cysteine pairs are disulfide-bonded: C233-C244, C261-C354, and C333-C346. One can recognise a C-type lectin domain in the interval 240–355 (FQGNCYFMSN…CNLAKFWICK (116 aa)). Residues E324, N326, I328, E331, N342, and D343 each contribute to the Ca(2+) site. A disordered region spans residues 359–381 (ASCSGDEERLLSPTPTTPNPPPE).

As to quaternary structure, homotetramer. Interacts with C1QBP; the interaction is indicative for a C1q:C1QBP:CD209 signaling complex. Interacts with ICAM2 and ICAM3 by binding to mannose-like carbohydrates. Interacts (via C-type lectin domain) with CEACAM1 (via Lewis X moieties); this interaction is regulated by the glycosylation pattern of CEACAM1 on cell types and regulates contact between dendritic cells and neutrophils. Expressed in lymph nodes.

Its subcellular location is the membrane. Functionally, pathogen-recognition receptor expressed on the surface of immature dendritic cells (DCs) and involved in initiation of primary immune response. Thought to mediate the endocytosis of pathogens which are subsequently degraded in lysosomal compartments. The receptor returns to the cell membrane surface and the pathogen-derived antigens are presented to resting T-cells via MHC class II proteins to initiate the adaptive immune response. Probably recognizes in a calcium-dependent manner high mannose N-linked oligosaccharides in a variety of pathogen antigens. On DCs it is a high affinity receptor for ICAM2 and ICAM3 by binding to mannose-like carbohydrates. May act as a DC rolling receptor that mediates transendothelial migration of DC presursors from blood to tissues by binding endothelial ICAM2. Seems to regulate DC-induced T-cell proliferation by binding to ICAM3 on T-cells in the immunological synapse formed between DC and T-cells. The polypeptide is CD209 antigen (CD209) (Chlorocebus aethiops (Green monkey)).